We begin with the raw amino-acid sequence, 155 residues long: Probable calcium-binding protein CML9 (155 aa).

EF-hand domains are found at residues 8-43, 86-121, and 122-155; these read EQVD…LGQN, ATEK…HGDR, and LTEE…MNNK. Residues Asp-21, Asp-23, Asp-25, Arg-27, and Glu-32 each contribute to the Ca(2+) site.

In terms of biological role, potential calcium sensor. This is Probable calcium-binding protein CML9 (CML9) from Oryza sativa subsp. japonica (Rice).